Consider the following 239-residue polypeptide: 2',3'-cyclic-nucleotide 3'-phosphodiesterase (239 aa).

Catalysis depends on proton donor/acceptor residues His39 and His150.

It belongs to the 2H phosphoesterase superfamily. CPD1 family.

It localises to the golgi apparatus. The catalysed reaction is ADP-alpha-D-ribose 1'',2''-cyclic phosphate + H2O = ADP-alpha-D-ribose 1''-phosphate + H(+). It catalyses the reaction 2',3'-cyclophospho-AMP + H2O = adenosine 2'-phosphate + H(+). The enzyme catalyses 2',3'-cyclophospho-GMP + H2O = guanosine 2'-phosphate + H(+). It carries out the reaction 2',3'-cyclophospho-UMP + H2O = uridine 2'-phosphate + H(+). The catalysed reaction is 2',3'-cyclophospho-CMP + H2O = cytidine 2'-phosphate + H(+). It catalyses the reaction a nucleoside 2',3'-cyclic phosphate + H2O = a nucleoside 2'-phosphate + H(+). Functionally, involved in the metabolism of ADP-ribose 1',2'-cyclic phosphate which is produced as a consequence of tRNA splicing. The polypeptide is 2',3'-cyclic-nucleotide 3'-phosphodiesterase (Saccharomyces cerevisiae (strain ATCC 204508 / S288c) (Baker's yeast)).